Here is a 127-residue protein sequence, read N- to C-terminus: Small ribosomal subunit protein bS6 (127 aa).

The tract at residues 99-127 (PLPAPRVVPGSEPAAAPQEQPAANSEAAS) is disordered. The span at 109-127 (SEPAAAPQEQPAANSEAAS) shows a compositional bias: low complexity.

The protein belongs to the bacterial ribosomal protein bS6 family.

Functionally, binds together with bS18 to 16S ribosomal RNA. In Parasynechococcus marenigrum (strain WH8102), this protein is Small ribosomal subunit protein bS6.